We begin with the raw amino-acid sequence, 311 residues long: MAKSRVLIVGGTGYLGRRMVKACLDQGHTTYVLHRQEVGVDIDKIQMLLSFKEQGAHLVEGSFNDHRSLVEAVKLVDVVICTISGVHIRSHQILLQLKLVEAIEEAGNVKRFLPSEFGMDPARMAHAMEPGRATFDEKMVVRKAIEDAKIPHTYASANCFAGYFLGGLCQFGKIIPSKESVILSGDGNVKGIYVDEYDIATYTIKTMDDPRTLNKTIYIRPPANILSQREVVEIWEKLIGKVLDKSSLSEEDFLALMKGLSHGHQAGLTHYYHVSYEGCLTNFEVEDGVDASKLYPQVNYTTVSEYLKRYL.

NADP(+)-binding positions include 10 to 16, R35, and K44; that span reads GGTGYLG. Catalysis depends on K138, which acts as the Proton acceptor. R142 contributes to the NADP(+) binding site. Position 270 (H270) interacts with substrate.

The protein belongs to the NmrA-type oxidoreductase family. Isoflavone reductase subfamily. Dimer. As to expression, expressed in rhizomes, stems, and leaves.

It carries out the reaction (-)-secoisolariciresinol + NADP(+) = (+)-lariciresinol + NADPH + H(+). The catalysed reaction is (+)-lariciresinol + NADP(+) = (+)-pinoresinol + NADPH + H(+). It functions in the pathway aromatic compound metabolism; phenylpropanoid biosynthesis. Functionally, reductase involved in lignan biosynthesis. Also involved in the biosynthesis of etoposide, a chemotherapeutic compound of the topoisomerase inhibitor family. Catalyzes the enantioselective sequential conversion of (+)-pinoresinol into (+)-lariciresinol and of (+)-lariciresinol into (-)-secoisolariciresinol. Abstracts the 4R-hydride from the NADPH cofactor during catalysis. The sequence is that of Bifunctional pinoresinol-lariciresinol reductase from Sinopodophyllum hexandrum (Himalayan may apple).